A 567-amino-acid polypeptide reads, in one-letter code: Proline--tRNA ligase (567 aa).

Belongs to the class-II aminoacyl-tRNA synthetase family. ProS type 1 subfamily. As to quaternary structure, homodimer.

Its subcellular location is the cytoplasm. The catalysed reaction is tRNA(Pro) + L-proline + ATP = L-prolyl-tRNA(Pro) + AMP + diphosphate. Functionally, catalyzes the attachment of proline to tRNA(Pro) in a two-step reaction: proline is first activated by ATP to form Pro-AMP and then transferred to the acceptor end of tRNA(Pro). As ProRS can inadvertently accommodate and process non-cognate amino acids such as alanine and cysteine, to avoid such errors it has two additional distinct editing activities against alanine. One activity is designated as 'pretransfer' editing and involves the tRNA(Pro)-independent hydrolysis of activated Ala-AMP. The other activity is designated 'posttransfer' editing and involves deacylation of mischarged Ala-tRNA(Pro). The misacylated Cys-tRNA(Pro) is not edited by ProRS. This Staphylococcus aureus (strain COL) protein is Proline--tRNA ligase.